A 724-amino-acid chain; its full sequence is Propionyl-CoA carboxylase alpha chain, mitochondrial (724 aa).

Residues 1–48 (MAGQWVRTVALLAARRHWRRSSQQQLLGTLKHAPVYSYQCLVVSRSLS) constitute a mitochondrion transit peptide. In terms of domain architecture, Biotin carboxylation spans 58–505 (TFDKILIANR…STKFLSDVYP (448 aa)). Lys61 carries the post-translational modification N6-acetyllysine; alternate. The residue at position 61 (Lys61) is an N6-succinyllysine; alternate. At Lys115 the chain carries N6-succinyllysine. Lys146 carries the post-translational modification N6-acetyllysine; alternate. Residue Lys146 is modified to N6-succinyllysine; alternate. Residue Lys150 is modified to N6-acetyllysine. Lys173 is a binding site for ATP. The ATP-grasp domain occupies 177–374 (KLLAKRAKVN…LVQEMILVAK (198 aa)). Lys184 bears the N6-succinyllysine mark. The residue at position 196 (Lys196) is an N6-acetyllysine; alternate. Lys196 bears the N6-succinyllysine; alternate mark. ATP contacts are provided by residues 205–266 (AREI…PRHI), Glu257, and Asn292. Ser248 bears the Phosphoserine mark. An N6-succinyllysine modification is found at Lys258. Lys324 carries the N6-acetyllysine; alternate modification. An N6-succinyllysine; alternate modification is found at Lys324. Glu332, Glu345, and Asn347 together coordinate Mg(2+). The Mn(2+) site is built by Glu332, Glu345, and Asn347. Residue Arg349 is part of the active site. Lys381 and Lys403 each carry N6-succinyllysine. Phe405 serves as a coordination point for biotin. Lys492 carries the post-translational modification N6-acetyllysine. 4 positions are modified to N6-succinyllysine: Lys498, Lys509, Lys554, and Lys644. One can recognise a Biotinyl-binding domain in the interval 645 to 724 (FMLEKVPKDT…GEGDLLVELE (80 aa)). Lys690 carries the post-translational modification N6-biotinyllysine; by HLCS.

The holoenzyme is a dodecamer composed of 6 PCCA/alpha subunits and 6 PCCB/beta subunits. Interacts (via the biotin carboxylation domain) with SIRT4. Interacts with SIRT3 and SIRT5. Requires Mg(2+) as cofactor. It depends on Mn(2+) as a cofactor. Biotin is required as a cofactor. Acetylated. In terms of processing, the biotin cofactor is covalently attached to the C-terminal biotinyl-binding domain and is required for the catalytic activity. Biotinylation is catalyzed by HLCS.

The protein localises to the mitochondrion matrix. It catalyses the reaction propanoyl-CoA + hydrogencarbonate + ATP = (S)-methylmalonyl-CoA + ADP + phosphate + H(+). The catalysed reaction is butanoyl-CoA + hydrogencarbonate + ATP = (2S)-ethylmalonyl-CoA + ADP + phosphate + H(+). It participates in metabolic intermediate metabolism; propanoyl-CoA degradation; succinyl-CoA from propanoyl-CoA: step 1/3. Its function is as follows. This is one of the 2 subunits of the biotin-dependent propionyl-CoA carboxylase (PCC), a mitochondrial enzyme involved in the catabolism of odd chain fatty acids, branched-chain amino acids isoleucine, threonine, methionine, and valine and other metabolites. Propionyl-CoA carboxylase catalyzes the carboxylation of propionyl-CoA/propanoyl-CoA to D-methylmalonyl-CoA/(S)-methylmalonyl-CoA. Within the holoenzyme, the alpha subunit catalyzes the ATP-dependent carboxylation of the biotin carried by the biotin carboxyl carrier (BCC) domain, while the beta subunit then transfers the carboxyl group from carboxylated biotin to propionyl-CoA. Propionyl-CoA carboxylase also significantly acts on butyryl-CoA/butanoyl-CoA, which is converted to ethylmalonyl-CoA/(2S)-ethylmalonyl-CoA. Other alternative minor substrates include (2E)-butenoyl-CoA/crotonoyl-CoA. The chain is Propionyl-CoA carboxylase alpha chain, mitochondrial from Mus musculus (Mouse).